Reading from the N-terminus, the 592-residue chain is Calnexin (592 aa).

The first 20 residues, 1–20 (MEGKWLLCMLLVLGTAIVEA), serve as a signal peptide directing secretion. Residues 21–481 (HDGHDDDVID…QMIEAAEERP (461 aa)) lie on the Lumenal side of the membrane. Positions 74 and 117 each coordinate Ca(2+). Lysine 137 carries the N6-acetyllysine modification. Cysteine 160 and cysteine 194 are disulfide-bonded. Residues tyrosine 164, lysine 166, tyrosine 185, and aspartate 192 each coordinate an alpha-D-glucoside. Residues 260–345 (GNLLNDMTPP…AEKPEDWDED (86 aa)) form a disordered region. Residues 274 to 319 (REIEDPEDRKPEDWDERPKIPDPEAVKPDDWDEDAPAKIPDEEATK) show a composition bias toward basic and acidic residues. Positions 276–409 (IEDPEDRKPE…RKIPNPDFFE (134 aa)) are p domain (Extended arm). Repeat copies occupy residues 278–290 (DPEDRKPEDWDER), 295–307 (DPEAVKPDDWDED), 314–326 (DEEATKPEGWLDD), 333–345 (DPDAEKPEDWDED), and 348–358 (GEWEAPQIANP). 2 4 X approximate repeats regions span residues 278–345 (DPED…WDED) and 348–405 (GEWE…IPNP). Over residues 323–345 (WLDDEPEYVPDPDAEKPEDWDED) the composition is skewed to acidic residues. Residues 326–359 (DEPEYVPDPDAEKPEDWDEDMDGEWEAPQIANPR) are interaction with PPIB. A disulfide bridge connects residues cysteine 360 and cysteine 366. Repeat copies occupy residues 367–377 (GVWQRPVIDNP), 381–391 (GKWKPPMIDNP), and 395–405 (GIWKPRKIPNP). Glutamate 425 lines the an alpha-D-glucoside pocket. Aspartate 436 is a Ca(2+) binding site. The chain crosses the membrane as a helical span at residues 482–502 (WLWVVYILTVALPVFLVILFC). 2 S-palmitoyl cysteine lipidation sites follow: cysteine 502 and cysteine 503. At 503-592 (CSGKKQTSGM…SPRNRKPRRE (90 aa)) the chain is on the cytoplasmic side. Residues 503-592 (CSGKKQTSGM…SPRNRKPRRE (90 aa)) form a sufficient to mediate interaction with SGIP1 region. Residues 511–592 (GMEYKKTDAP…SPRNRKPRRE (82 aa)) form a disordered region. Positions 525-547 (KEEEEEKEEEKDKGDEEEEGEEK) are enriched in acidic residues. Serine 554 bears the Phosphoserine mark. A Phosphothreonine modification is found at threonine 562. A Phosphoserine; by MAPK3 modification is found at serine 564. At serine 583 the chain carries Phosphoserine.

It belongs to the calreticulin family. As to quaternary structure, interacts with MAPK3/ERK1. Interacts with KCNH2. Associates with ribosomes. Interacts with SGIP1; involved in negative regulation of endocytosis. The palmitoylated form interacts with the ribosome-translocon complex component SSR1, promoting efficient folding of glycoproteins. Interacts with SERPINA2P/SERPINA2 and with the S and Z variants of SERPINA1. Interacts with PPIB. Interacts with ZNRF4. Interacts with SMIM22. Interacts with TMX2. Interacts with TMEM35A/NACHO. Interacts with CHRNA7. Interacts with reticulophagy regulators RETREG2 and RETREG3. Interacts with DNM1L; may form part of a larger protein complex at the ER-mitochondrial interface during mitochondrial fission. Interacts with ADAM7. In terms of assembly, (Microbial infection) Interacts with HBV large envelope protein, isoform L. (Microbial infection) Interacts with HBV large envelope protein, isoform M; this association may be essential for isoform M proper secretion. Phosphorylated at Ser-564 by MAPK3/ERK1. Phosphorylation by MAPK3/ERK1 increases its association with ribosomes. Post-translationally, palmitoylation by DHHC6 leads to the preferential localization to the perinuclear rough ER. It mediates the association of calnexin with the ribosome-translocon complex (RTC) which is required for efficient folding of glycosylated proteins. In terms of processing, ubiquitinated, leading to proteasomal degradation. Probably ubiquitinated by ZNRF4.

It is found in the endoplasmic reticulum membrane. The protein resides in the mitochondrion membrane. Its subcellular location is the melanosome membrane. In terms of biological role, calcium-binding protein that interacts with newly synthesized monoglucosylated glycoproteins in the endoplasmic reticulum. It may act in assisting protein assembly and/or in the retention within the ER of unassembled protein subunits. It seems to play a major role in the quality control apparatus of the ER by the retention of incorrectly folded proteins. Associated with partial T-cell antigen receptor complexes that escape the ER of immature thymocytes, it may function as a signaling complex regulating thymocyte maturation. Additionally it may play a role in receptor-mediated endocytosis at the synapse. The polypeptide is Calnexin (CANX) (Homo sapiens (Human)).